We begin with the raw amino-acid sequence, 480 residues long: Putative auxin transporter-like protein 4 (480 aa).

Topologically, residues 1–66 (MASEKVETIV…DAWFSCASNQ (66 aa)) are cytoplasmic. Residues 67-84 (VAQVLLTLPYSFSQLGMA) traverse the membrane as a helical segment. Residues 85 to 86 (SG) lie on the Extracellular side of the membrane. Residues 87-107 (VAFQVFYGLMGSWTAYLISVL) traverse the membrane as a helical segment. Topologically, residues 108 to 143 (YVEYRTRRERDKVDFRNHVIQWFEVLDGLLGRHWRN) are cytoplasmic. A helical transmembrane segment spans residues 144 to 164 (AGLLFNCTFLLFGSVIQLIAC). The Extracellular portion of the chain corresponds to 165-179 (ASNIYYINDRLDKRT). The chain crosses the membrane as a helical span at residues 180-200 (WTYIFGACCATTVFVPSFHNY). Over 201–203 (RVW) the chain is Cytoplasmic. The helical transmembrane segment at 204-224 (SFLGLLMTSYTAWYLTVAAVV) threads the bilayer. At 225–241 (HGKVDGAAPRAGPSKTM) the chain is on the extracellular side. A helical membrane pass occupies residues 242-262 (VLYFTGATNILYTFGGHAVTV). The Cytoplasmic portion of the chain corresponds to 263-275 (EIMHAMWRPRRFK). A helical membrane pass occupies residues 276-296 (MIYLAATAYVLTLTLPSAAAM). At 297–323 (YWAFGDALLDHSNAFALLPRTPWRDAA) the chain is on the extracellular side. Residues 324–344 (VVLMLIHQFITFGFACTPLYF) form a helical membrane-spanning segment. The Cytoplasmic portion of the chain corresponds to 345–365 (VWEKAIGVHGGAGVLRRAAAR). The chain crosses the membrane as a helical span at residues 366 to 386 (LPVVLPIWFLAVIFPFFGPIN). Serine 387 is a topological domain (extracellular). Residues 388 to 408 (TVGSFLVSFTVYIIPAMAHMA) traverse the membrane as a helical segment. The Cytoplasmic portion of the chain corresponds to 409 to 433 (TFAPAAARENAVEPPPRALGGWPGT). Residues 434–454 (FAANCFVVAWVLVVGFGFGGW) traverse the membrane as a helical segment. The Extracellular segment spans residues 455 to 480 (ASTVNFVRQVDTFGLFTKCYQCPPRH).

Belongs to the amino acid/polyamine transporter 2 family. Amino acid/auxin permease (AAAP) (TC 2.A.18.1) subfamily.

The protein localises to the cell membrane. In terms of biological role, carrier protein involved in proton-driven auxin influx. May mediate the formation of auxin gradient from developing leaves (site of auxin biosynthesis) to tips. The polypeptide is Putative auxin transporter-like protein 4 (Oryza sativa subsp. japonica (Rice)).